The primary structure comprises 50 residues: MGKKTVGVKKRLAKAYKQNRRAPVWITVKTKRSVFGSPKRRHWRRSKLKV.

The protein belongs to the eukaryotic ribosomal protein eL39 family.

This Archaeoglobus fulgidus (strain ATCC 49558 / DSM 4304 / JCM 9628 / NBRC 100126 / VC-16) protein is Large ribosomal subunit protein eL39 (rpl39e).